The sequence spans 217 residues: Magnetosome protein MamA (217 aa).

6 TPR repeats span residues V12–I44, Q46–D79, V80–N113, V114–N147, F148–E181, and G182–A215. The interval N41–D112 is N-terminal domain (NTD). The tract at residues N113–V217 is C-terminal domain (CTD).

This sequence belongs to the magnetosome MamA family. In terms of assembly, oligomerizes into high molecular weight complexes (at least 560 kDa). Forms round, 20 nm diameter complexes with a central cavity. Interacts with full-length Mms6. Probably binds MamC.

Its subcellular location is the magnetosome membrane. Functionally, probably forms a large homooligomer on which other magnetosome subunits assemble. Required for formation of functional magnetosomes from pre-existing vesicles, it has a dynamic location in the cell. In Paramagnetospirillum magneticum (strain ATCC 700264 / AMB-1) (Magnetospirillum magneticum), this protein is Magnetosome protein MamA.